The sequence spans 121 residues: Large ribosomal subunit protein uL14c (121 aa).

It belongs to the universal ribosomal protein uL14 family. In terms of assembly, part of the 50S ribosomal subunit.

The protein localises to the plastid. The protein resides in the chloroplast. Functionally, binds to 23S rRNA. This is Large ribosomal subunit protein uL14c from Trieres chinensis (Marine centric diatom).